Here is a 382-residue protein sequence, read N- to C-terminus: Pentatricopeptide repeat-containing protein 2, mitochondrial (382 aa).

A PPR repeat occupies 159–193 (TSFNILMDMLFTKGQYERAVEVLVEMRNQRVRFSK).

This sequence belongs to the PTCD2 family.

It is found in the mitochondrion. In terms of biological role, may be involved in mitochondrial RNA maturation and mitochondrial respiratory chain function. The polypeptide is Pentatricopeptide repeat-containing protein 2, mitochondrial (ptcd2) (Xenopus laevis (African clawed frog)).